A 150-amino-acid chain; its full sequence is Ribonuclease K6 (150 aa).

An N-terminal signal peptide occupies residues 1 to 23 (MVLCFPLLLLLLVLWGPVCLLHA). The Proton acceptor role is filled by His-38. 4 cysteine pairs are disulfide-bonded: Cys-46–Cys-104, Cys-60–Cys-114, Cys-78–Cys-129, and Cys-85–Cys-92. The N-linked (GlcNAc...) asparagine glycan is linked to Asn-55. Substrate-binding positions include 61–65 (KHQNT) and Lys-86. A glycan (N-linked (GlcNAc...) asparagine) is linked at Asn-100. Arg-105 is a binding site for substrate. His-145 serves as the catalytic Proton donor.

Belongs to the pancreatic ribonuclease family. In terms of assembly, interacts (via N-terminus) with bacterial lipopolysaccharide (LPS).

Its subcellular location is the secreted. The protein resides in the lysosome. It is found in the cytoplasmic granule. Its function is as follows. Ribonuclease which shows a preference for the pyrimidines uridine and cytosine. Has potent antibacterial activity against a range of Gram-positive and Gram-negative bacteria, including P.aeruginosa, A.baumanii, M.luteus, S.aureus, E.faecalis, E.faecium, S.saprophyticus and E.coli. Causes loss of bacterial membrane integrity, and also promotes agglutination of Gram-negative bacteria. Probably contributes to urinary tract sterility. Bactericidal activity is independent of RNase activity. This chain is Ribonuclease K6 (RNASE6), found in Papio hamadryas (Hamadryas baboon).